A 617-amino-acid chain; its full sequence is 1-deoxy-D-xylulose-5-phosphate synthase (617 aa).

Thiamine diphosphate contacts are provided by residues histidine 77 and glycine 118–serine 120. A Mg(2+)-binding site is contributed by aspartate 149. Residues glycine 150–alanine 151, asparagine 178, tyrosine 286, and glutamate 367 each bind thiamine diphosphate. A Mg(2+)-binding site is contributed by asparagine 178.

This sequence belongs to the transketolase family. DXPS subfamily. In terms of assembly, homodimer. It depends on Mg(2+) as a cofactor. Requires thiamine diphosphate as cofactor.

It catalyses the reaction D-glyceraldehyde 3-phosphate + pyruvate + H(+) = 1-deoxy-D-xylulose 5-phosphate + CO2. It participates in metabolic intermediate biosynthesis; 1-deoxy-D-xylulose 5-phosphate biosynthesis; 1-deoxy-D-xylulose 5-phosphate from D-glyceraldehyde 3-phosphate and pyruvate: step 1/1. Its function is as follows. Catalyzes the acyloin condensation reaction between C atoms 2 and 3 of pyruvate and glyceraldehyde 3-phosphate to yield 1-deoxy-D-xylulose-5-phosphate (DXP). The polypeptide is 1-deoxy-D-xylulose-5-phosphate synthase (Actinobacillus pleuropneumoniae serotype 5b (strain L20)).